The chain runs to 363 residues: Pyrimidine monooxygenase RutA (363 aa).

FMN is bound by residues 49–50, Asn-115, Glu-124, 140–141, and Ser-190; these read IK and RY.

This sequence belongs to the NtaA/SnaA/DszA monooxygenase family. RutA subfamily.

The catalysed reaction is uracil + FMNH2 + NADH + O2 = (Z)-3-ureidoacrylate + FMN + NAD(+) + H2O + H(+). It catalyses the reaction thymine + FMNH2 + NADH + O2 = (Z)-2-methylureidoacrylate + FMN + NAD(+) + H2O + H(+). Functionally, catalyzes the pyrimidine ring opening between N-3 and C-4 by an unusual flavin hydroperoxide-catalyzed mechanism, adding oxygen atoms in the process to yield ureidoacrylate peracid, that immediately reacts with FMN forming ureidoacrylate and FMN-N(5)-oxide. The FMN-N(5)-oxide reacts spontaneously with NADH to produce FMN. Requires the flavin reductase RutF to regenerate FMN in vivo. The polypeptide is Pyrimidine monooxygenase RutA (Escherichia coli (strain SMS-3-5 / SECEC)).